The primary structure comprises 224 residues: ATP-dependent dethiobiotin synthetase BioD (224 aa).

A Mg(2+)-binding site is contributed by Thr18. The active site involves Lys39. Ser43 is a binding site for substrate. Asp56 and Glu117 together coordinate Mg(2+). Residues Asp56, 117-120 (EGVG), and 177-178 (NE) contribute to the ATP site.

Belongs to the dethiobiotin synthetase family. Homodimer. Requires Mg(2+) as cofactor.

The protein localises to the cytoplasm. The enzyme catalyses (7R,8S)-7,8-diammoniononanoate + CO2 + ATP = (4R,5S)-dethiobiotin + ADP + phosphate + 3 H(+). The protein operates within cofactor biosynthesis; biotin biosynthesis; biotin from 7,8-diaminononanoate: step 1/2. Its function is as follows. Catalyzes a mechanistically unusual reaction, the ATP-dependent insertion of CO2 between the N7 and N8 nitrogen atoms of 7,8-diaminopelargonic acid (DAPA, also called 7,8-diammoniononanoate) to form a ureido ring. The protein is ATP-dependent dethiobiotin synthetase BioD of Xanthomonas axonopodis pv. citri (strain 306).